A 342-amino-acid polypeptide reads, in one-letter code: DDB1- and CUL4-associated factor 7 (342 aa).

7 WD repeats span residues 6 to 52 (KRKE…LVGL), 60 to 100 (ICRN…VWRV), 108 to 150 (ECLL…IWGL), 165 to 206 (HVKT…MFDL), 213 to 252 (TIIY…ILDV), 257 to 296 (TPVA…IWDI), and 303 to 342 (IEDP…ILRV).

This sequence belongs to the WD repeat DCAF7 family. Interacts with DYRK1A, DYRK1B and DIAPH1. Interacts with DDB1. Interacts with ZNF703. Interacts with human adenovirus 5 E1A protein.

It is found in the cytoplasm. The protein resides in the nucleus. Its pathway is protein modification; protein ubiquitination. In terms of biological role, involved in craniofacial development. Acts upstream of the EDN1 pathway and is required for formation of the upper jaw equivalent, the palatoquadrate. The activity required for EDN1 pathway function differs between the first and second arches. Associates with DIAPH1 and controls GLI1 transcriptional activity. Could be involved in normal and disease skin development. May function as a substrate receptor for CUL4-DDB1 E3 ubiquitin-protein ligase complex. The protein is DDB1- and CUL4-associated factor 7 (DCAF7) of Homo sapiens (Human).